Reading from the N-terminus, the 584-residue chain is Galectin-3-binding protein (584 aa).

The N-terminal stretch at methionine 1 to glycine 18 is a signal peptide. Residues methionine 24 to threonine 124 form the SRCR domain. Cystine bridges form between cysteine 49/cysteine 113, cysteine 62/cysteine 123, and cysteine 93/cysteine 103. A glycan (N-linked (GlcNAc...) asparagine) is linked at asparagine 69. Residues asparagine 125 and asparagine 192 are each glycosylated (N-linked (GlcNAc...) asparagine). In terms of domain architecture, BTB spans cysteine 153–leucine 221. The region spanning proline 260 to glutamine 359 is the BACK domain. Residues asparagine 361, asparagine 397, asparagine 550, and asparagine 579 are each glycosylated (N-linked (GlcNAc...) asparagine).

In terms of assembly, homodimers and homomultimers. The multimers form ring-like structures with a diameter of 30-40 nm. Binds LGALS1 and LGALS3. Binds ITGB1, COL4A1, COL5A1, COL6A1, FN1 and NID. Interacts with the gamma-tubulin ring complex (gamma-TuRC), composed of gamma-tubulin, TUBGCP2, TUBGCP3, TUBGCP4, TUBGCP5 and TUBGCP6. The unglycosylated form interacts with PDE4DIP; this interaction, which is PDE4DIP isoform-specific, may connect a pericentrosomal complex, made of AKAP9, CDK5RAP2, EB1/MAPRE1 and PDE4DIP, to the gamma-tubulin ring complex (gamma-TuRC) to promote microtubule assembly and acetylation.

It is found in the secreted. The protein localises to the extracellular space. Its subcellular location is the extracellular matrix. Functionally, promotes integrin-mediated cell adhesion. May stimulate host defense against viruses and tumor cells. The protein is Galectin-3-binding protein (LGALS3BP) of Pongo abelii (Sumatran orangutan).